Here is a 215-residue protein sequence, read N- to C-terminus: Cytidylate kinase (215 aa).

Residue 10–18 coordinates ATP; it reads GPAASGKGT.

This sequence belongs to the cytidylate kinase family. Type 1 subfamily.

The protein resides in the cytoplasm. The enzyme catalyses CMP + ATP = CDP + ADP. It catalyses the reaction dCMP + ATP = dCDP + ADP. The polypeptide is Cytidylate kinase (Bartonella henselae (strain ATCC 49882 / DSM 28221 / CCUG 30454 / Houston 1) (Rochalimaea henselae)).